A 235-amino-acid polypeptide reads, in one-letter code: Phosphoribosylaminoimidazole-succinocarboxamide synthase (235 aa).

Belongs to the SAICAR synthetase family.

It catalyses the reaction 5-amino-1-(5-phospho-D-ribosyl)imidazole-4-carboxylate + L-aspartate + ATP = (2S)-2-[5-amino-1-(5-phospho-beta-D-ribosyl)imidazole-4-carboxamido]succinate + ADP + phosphate + 2 H(+). It participates in purine metabolism; IMP biosynthesis via de novo pathway; 5-amino-1-(5-phospho-D-ribosyl)imidazole-4-carboxamide from 5-amino-1-(5-phospho-D-ribosyl)imidazole-4-carboxylate: step 1/2. This chain is Phosphoribosylaminoimidazole-succinocarboxamide synthase, found in Streptococcus gordonii (strain Challis / ATCC 35105 / BCRC 15272 / CH1 / DL1 / V288).